A 261-amino-acid polypeptide reads, in one-letter code: Glucanase inhibitor protein 3 (261 aa).

The N-terminal stretch at 1-21 (MKVLSSLAAALIALSAVDVEA) is a signal peptide. The Peptidase S1 domain maps to 29 to 260 (ILGGGKVPVG…GIEWINSVIK (232 aa)). A disulfide bond links C56 and C72. Residue N108 is glycosylated (N-linked (GlcNAc...) asparagine). 2 disulfide bridges follow: C183–C195 and C205–C236.

The protein belongs to the peptidase S1 family.

The protein localises to the secreted. Secreted effector that suppresses host plant glucan elicitor-mediated defense responses. Targets host endoglucanases and inhibits the endoglucanase-mediated release of elicitor-active glucan oligosaccharides from P.sojae cell walls. The polypeptide is Glucanase inhibitor protein 3 (GIP3) (Phytophthora sojae (strain P6497) (Soybean stem and root rot agent)).